A 455-amino-acid chain; its full sequence is Chromosomal replication initiator protein DnaA (455 aa).

Residues 1-82 (MNRNTSSLWA…NPDFVVKLVE (82 aa)) are domain I, interacts with DnaA modulators. Residues 82–117 (EGVKPAPKQNNIVTTKQNAETAVDSEQHLQSVEFKT) are domain II. The segment at 118-335 (GLNSNHLFEN…GALNRVIANA (218 aa)) is domain III, AAA+ region. Residues glycine 163, glycine 165, lysine 166, and threonine 167 each contribute to the ATP site. Residues 336–455 (EFTGKTITID…WSNLIRTLSA (120 aa)) are domain IV, binds dsDNA.

This sequence belongs to the DnaA family. In terms of assembly, oligomerizes as a right-handed, spiral filament on DNA at oriC.

It is found in the cytoplasm. In terms of biological role, plays an essential role in the initiation and regulation of chromosomal replication. ATP-DnaA binds to the origin of replication (oriC) to initiate formation of the DNA replication initiation complex once per cell cycle. Binds the DnaA box (a 9 base pair repeat at the origin) and separates the double-stranded (ds)DNA. Forms a right-handed helical filament on oriC DNA; dsDNA binds to the exterior of the filament while single-stranded (ss)DNA is stabiized in the filament's interior. The ATP-DnaA-oriC complex binds and stabilizes one strand of the AT-rich DNA unwinding element (DUE), permitting loading of DNA polymerase. After initiation quickly degrades to an ADP-DnaA complex that is not apt for DNA replication. Binds acidic phospholipids. The protein is Chromosomal replication initiator protein DnaA of Actinobacillus succinogenes (strain ATCC 55618 / DSM 22257 / CCUG 43843 / 130Z).